The primary structure comprises 191 residues: Neuronal calcium sensor 1 (191 aa).

G2 carries the N-myristoyl glycine lipid modification. 4 EF-hand domains span residues 24–59, 60–95, 96–131, and 144–179; these read EAEI…FPFG, DPSK…TSRG, TVEE…IYRM, and TPEK…DPTI. Residues D73, N75, D77, E84, D109, D111, D113, E120, D157, N159, D161, K163, and E168 each coordinate Ca(2+).

This sequence belongs to the recoverin family.

Neuronal calcium sensor, regulator of G protein-coupled receptor phosphorylation in a calcium dependent manner. Regulates neurite extension and branching by activity-dependent (Ca2+) influx in growth cones. The polypeptide is Neuronal calcium sensor 1 (Aplysia californica (California sea hare)).